The chain runs to 291 residues: Urease accessory protein UreD (291 aa).

Belongs to the UreD family. As to quaternary structure, ureD, UreF and UreG form a complex that acts as a GTP-hydrolysis-dependent molecular chaperone, activating the urease apoprotein by helping to assemble the nickel containing metallocenter of UreC. The UreE protein probably delivers the nickel.

It localises to the cytoplasm. Functionally, required for maturation of urease via the functional incorporation of the urease nickel metallocenter. The protein is Urease accessory protein UreD of Acinetobacter baumannii (strain ATCC 17978 / DSM 105126 / CIP 53.77 / LMG 1025 / NCDC KC755 / 5377).